The following is a 242-amino-acid chain: Protein LST7 (242 aa).

The uDENN FLCN/SMCR8-type domain maps to 48-212 (SCLLQFPEES…NKSKFGRNLV (165 aa)).

Its function is as follows. Required for the nitrogen-regulated transport of amino acid permeases GAP1 and PUT4 from the Golgi to the cell surface. The polypeptide is Protein LST7 (LST7) (Saccharomyces cerevisiae (strain ATCC 204508 / S288c) (Baker's yeast)).